Reading from the N-terminus, the 391-residue chain is Cathepsin E (391 aa).

The N-terminal stretch at 1 to 19 is a signal peptide; sequence MKTFLLLLLVLLELGQAPG. The propeptide at 20–53 is activation peptide; that stretch reads ALHRVPLSRRESLRKKLRAQGQLTELWKSQNLNM. The Peptidase A1 domain maps to 74-387; that stretch reads YFGTISIGSP…DRGNNRVGLA (314 aa). A glycan (N-linked (GlcNAc...) asparagine) is linked at Asn86. Asp92 is a catalytic residue. 2 disulfide bridges follow: Cys105/Cys110 and Cys267/Cys271. Residue Asp276 is part of the active site. Cysteines 309 and 346 form a disulfide.

The protein belongs to the peptidase A1 family. As to quaternary structure, homodimer; disulfide-linked. Glycosylated. The nature of the carbohydrate chain varies between cell types. In terms of tissue distribution, expressed abundantly in the surface and foveolar epithelial cells of the fundic and pyloric stomach mucosa, and at very low levels in the spleen.

The protein resides in the endosome. The catalysed reaction is Similar to cathepsin D, but slightly broader specificity.. In terms of biological role, may have a role in immune function. Probably involved in the processing of antigenic peptides during MHC class II-mediated antigen presentation. May play a role in activation-induced lymphocyte depletion in the thymus, and in neuronal degeneration and glial cell activation in the brain. This chain is Cathepsin E (CTSE), found in Cavia porcellus (Guinea pig).